A 684-amino-acid chain; its full sequence is Soluble guanylate cyclase gcy-32 (684 aa).

H105 contributes to the heme binding site. Residues 396-432 (DVEVNLQLEANNEQLETMTRELELERQKTDSILKDML) are a coiled coil. A Guanylate cyclase domain is found at 454 to 582 (TVMFCDLPAF…ETVTLASQME (129 aa)). Positions 459 and 503 each coordinate Mg(2+).

It belongs to the adenylyl cyclase class-4/guanylyl cyclase family. As to quaternary structure, heterodimer; with other soluble guanylate cyclases. It depends on heme as a cofactor. In terms of tissue distribution, expressed in a small number of neurons, corresponding to URX, AQR and PQR neurons.

The protein localises to the cytoplasm. It catalyses the reaction GTP = 3',5'-cyclic GMP + diphosphate. Its activity is regulated as follows. May be regulated by molecular oxygen. Probably not activated by nitric oxide (NO). In terms of biological role, synthesizes cyclic GMP (cGMP) from GTP. Influences aerotaxis responses, aggregation and bordering behaviors (gathering around the edge of a bacterial lawn) in combination with other soluble guanylate cyclases. This Caenorhabditis elegans protein is Soluble guanylate cyclase gcy-32 (gcy-32).